A 244-amino-acid polypeptide reads, in one-letter code: Guanine nucleotide exchange factor rei-1 (244 aa).

Coiled-coil stretches lie at residues 6-39 (DQLISIRKQLENLNNATDDINSYEMKLETVKKQF) and 81-144 (VQQA…KAEK). Positions 221-244 (DQIHQERSSQSSLAPSSDAESDSS) are disordered. A compositionally biased stretch (low complexity) spans 228–238 (SSQSSLAPSSD).

This sequence belongs to the SH3BP5 family. Homodimer, tetramer and multimer. Interacts with rab-11.1. Binds preferentially to the GDP-bound form of rab-11.1. Expressed in germ cells.

It is found in the cytoplasmic granule. The protein resides in the golgi apparatus membrane. Its function is as follows. Guanine nucleotide exchange factor for Rab GTPase Rab-11.1. Spatially and temporally regulates the distribution of Rab-11.1 to target membranes during embryogenesis. Plays a role in cytokinesis, probably by targeting rab-11.1 to the cleavage furrows. This is Guanine nucleotide exchange factor rei-1 from Caenorhabditis elegans.